The sequence spans 265 residues: 5'-nucleotidase SurE (265 aa).

The a divalent metal cation site is built by Asp-11, Asp-12, Ser-43, and Asn-101.

Belongs to the SurE nucleotidase family. A divalent metal cation serves as cofactor.

It localises to the cytoplasm. It carries out the reaction a ribonucleoside 5'-phosphate + H2O = a ribonucleoside + phosphate. Functionally, nucleotidase that shows phosphatase activity on nucleoside 5'-monophosphates. The sequence is that of 5'-nucleotidase SurE from Synechococcus sp. (strain CC9311).